The sequence spans 43 residues: Protein PsbN (43 aa).

The chain crosses the membrane as a helical span at residues 5–27; the sequence is TLIAIFISCSLVSFTGYALYTAF.

Belongs to the PsbN family.

The protein localises to the plastid. It is found in the chloroplast thylakoid membrane. Its function is as follows. May play a role in photosystem I and II biogenesis. This Lopidium concinnum (Moss) protein is Protein PsbN.